The primary structure comprises 285 residues: NAD kinase (285 aa).

Asp-68 (proton acceptor) is an active-site residue. NAD(+) contacts are provided by residues Asp-68–Gly-69, Asn-142–Asp-143, Arg-153, Lys-170, Asp-172, Thr-183–Ser-188, and Gln-242.

It belongs to the NAD kinase family. The cofactor is a divalent metal cation.

Its subcellular location is the cytoplasm. The catalysed reaction is NAD(+) + ATP = ADP + NADP(+) + H(+). Involved in the regulation of the intracellular balance of NAD and NADP, and is a key enzyme in the biosynthesis of NADP. Catalyzes specifically the phosphorylation on 2'-hydroxyl of the adenosine moiety of NAD to yield NADP. This chain is NAD kinase, found in Syntrophotalea carbinolica (strain DSM 2380 / NBRC 103641 / GraBd1) (Pelobacter carbinolicus).